Reading from the N-terminus, the 245-residue chain is tRNA pseudouridine synthase A (245 aa).

D52 acts as the Nucleophile in catalysis. Y111 contacts substrate.

Belongs to the tRNA pseudouridine synthase TruA family. Homodimer.

The catalysed reaction is uridine(38/39/40) in tRNA = pseudouridine(38/39/40) in tRNA. In terms of biological role, formation of pseudouridine at positions 38, 39 and 40 in the anticodon stem and loop of transfer RNAs. In Thermotoga maritima (strain ATCC 43589 / DSM 3109 / JCM 10099 / NBRC 100826 / MSB8), this protein is tRNA pseudouridine synthase A.